The sequence spans 343 residues: tRNA N6-adenosine threonylcarbamoyltransferase (343 aa).

Residues His-108 and His-112 each coordinate Fe cation. Residues 129 to 133 (LISGG), Asp-161, Glu-178, and Ser-258 each bind substrate. Asp-286 is a Fe cation binding site.

The protein belongs to the KAE1 / TsaD family. Fe(2+) is required as a cofactor.

It is found in the cytoplasm. It catalyses the reaction L-threonylcarbamoyladenylate + adenosine(37) in tRNA = N(6)-L-threonylcarbamoyladenosine(37) in tRNA + AMP + H(+). Functionally, required for the formation of a threonylcarbamoyl group on adenosine at position 37 (t(6)A37) in tRNAs that read codons beginning with adenine. Is probably involved in the transfer of the threonylcarbamoyl moiety of threonylcarbamoyl-AMP (TC-AMP) to the N6 group of A37. The chain is tRNA N6-adenosine threonylcarbamoyltransferase from Pyrobaculum aerophilum (strain ATCC 51768 / DSM 7523 / JCM 9630 / CIP 104966 / NBRC 100827 / IM2).